A 342-amino-acid polypeptide reads, in one-letter code: GTPase Obg (342 aa).

The region spanning 1-159 is the Obg domain; sequence MKFLDLCKVY…RTIWLRLKLI (159 aa). The region spanning 160–327 is the OBG-type G domain; sequence ADAGLLGLPN…VLRALWAEID (168 aa). GTP contacts are provided by residues 166–173, 191–195, 212–215, 279–282, and 308–310; these read GLPNAGKS, FTTLV, DIPG, NKID, and SGV. Residues S173 and T193 each coordinate Mg(2+).

Belongs to the TRAFAC class OBG-HflX-like GTPase superfamily. OBG GTPase family. Monomer. Requires Mg(2+) as cofactor.

It is found in the cytoplasm. In terms of biological role, an essential GTPase which binds GTP, GDP and possibly (p)ppGpp with moderate affinity, with high nucleotide exchange rates and a fairly low GTP hydrolysis rate. Plays a role in control of the cell cycle, stress response, ribosome biogenesis and in those bacteria that undergo differentiation, in morphogenesis control. This is GTPase Obg from Cereibacter sphaeroides (strain ATCC 17029 / ATH 2.4.9) (Rhodobacter sphaeroides).